The sequence spans 160 residues: Nucleotide-binding protein Smal_3487 (160 aa).

It belongs to the YajQ family.

In terms of biological role, nucleotide-binding protein. This is Nucleotide-binding protein Smal_3487 from Stenotrophomonas maltophilia (strain R551-3).